The sequence spans 424 residues: Phosphoribosylamine--glycine ligase (424 aa).

The ATP-grasp domain maps to Lys111–Lys312. Ile137–Ser189 is an ATP binding site.

This sequence belongs to the GARS family.

It catalyses the reaction 5-phospho-beta-D-ribosylamine + glycine + ATP = N(1)-(5-phospho-beta-D-ribosyl)glycinamide + ADP + phosphate + H(+). The protein operates within purine metabolism; IMP biosynthesis via de novo pathway; N(1)-(5-phospho-D-ribosyl)glycinamide from 5-phospho-alpha-D-ribose 1-diphosphate: step 2/2. In Helicobacter pylori (strain ATCC 700392 / 26695) (Campylobacter pylori), this protein is Phosphoribosylamine--glycine ligase (purD).